The chain runs to 485 residues: N-succinylglutamate 5-semialdehyde dehydrogenase 2 (485 aa).

221–226 is an NAD(+) binding site; sequence GSAAAG. Residues glutamate 244 and cysteine 279 contribute to the active site.

The protein belongs to the aldehyde dehydrogenase family. AstD subfamily.

The catalysed reaction is N-succinyl-L-glutamate 5-semialdehyde + NAD(+) + H2O = N-succinyl-L-glutamate + NADH + 2 H(+). Its pathway is amino-acid degradation; L-arginine degradation via AST pathway; L-glutamate and succinate from L-arginine: step 4/5. Catalyzes the NAD-dependent reduction of succinylglutamate semialdehyde into succinylglutamate. This chain is N-succinylglutamate 5-semialdehyde dehydrogenase 2, found in Caulobacter vibrioides (strain ATCC 19089 / CIP 103742 / CB 15) (Caulobacter crescentus).